Reading from the N-terminus, the 320-residue chain is MVKKIGVLTSGGDAPGMNAAVRGVVRTALTQGLEVFGIHDGYLGLVEDRIEKLERHSVSDMINRGGTFLGSARFPEFKEVAVREKAIANLKKHDIDALIVIGGDGSYMGAKKLTEMGYPCIGLPGTIDNDIAGTDYTIGYLTALNTVIDAIDRLRDTSSSHQRISIVEVMGRHCGDLTLMAAIAGGCEYVITPETGLNKEALIQNIQDGIAKGKKHAIIAITELMTDVNALAKEIEAETGRETRATVLGHIQRGGQPGAFDRILASRMGNYGVKLLVEGHGGRCVGIQNEQLVHHDIIDAIENMRRPEKLELYKVAEELF.

An ATP-binding site is contributed by glycine 12. 22-26 (RGVVR) is an ADP binding site. Residues 73–74 (RF) and 103–106 (GDGS) contribute to the ATP site. Residue aspartate 104 coordinates Mg(2+). 126 to 128 (TID) is a binding site for substrate. Aspartate 128 acts as the Proton acceptor in catalysis. Arginine 155 lines the ADP pocket. Residues arginine 163 and 170–172 (MGR) contribute to the substrate site. Residues 186-188 (GCE), lysine 212, and 214-216 (KKH) contribute to the ADP site. Substrate contacts are provided by residues glutamate 223, arginine 244, and 250–253 (HIQR).

It belongs to the phosphofructokinase type A (PFKA) family. ATP-dependent PFK group I subfamily. Prokaryotic clade 'B1' sub-subfamily. Homotetramer. Mg(2+) serves as cofactor.

It localises to the cytoplasm. The enzyme catalyses beta-D-fructose 6-phosphate + ATP = beta-D-fructose 1,6-bisphosphate + ADP + H(+). Its pathway is carbohydrate degradation; glycolysis; D-glyceraldehyde 3-phosphate and glycerone phosphate from D-glucose: step 3/4. Its activity is regulated as follows. Allosterically activated by ADP and other diphosphonucleosides, and allosterically inhibited by phosphoenolpyruvate. Functionally, catalyzes the phosphorylation of D-fructose 6-phosphate to fructose 1,6-bisphosphate by ATP, the first committing step of glycolysis. The chain is ATP-dependent 6-phosphofructokinase from Aliivibrio salmonicida (strain LFI1238) (Vibrio salmonicida (strain LFI1238)).